Here is a 438-residue protein sequence, read N- to C-terminus: Aspartate--tRNA(Asp/Asn) ligase (438 aa).

Glutamate 176 contacts L-aspartate. The tract at residues 198-201 is aspartate; it reads QLYK. Residue arginine 220 participates in L-aspartate binding. ATP is bound by residues 220-222, 228-230, and glutamate 361; these read RAE and RHL. Mg(2+)-binding residues include glutamate 361 and serine 364. L-aspartate-binding residues include serine 364 and arginine 368. 409 to 412 lines the ATP pocket; that stretch reads GADR.

It belongs to the class-II aminoacyl-tRNA synthetase family. Type 2 subfamily. Homodimer. The cofactor is Mg(2+).

It is found in the cytoplasm. It catalyses the reaction tRNA(Asx) + L-aspartate + ATP = L-aspartyl-tRNA(Asx) + AMP + diphosphate. In terms of biological role, aspartyl-tRNA synthetase with relaxed tRNA specificity since it is able to aspartylate not only its cognate tRNA(Asp) but also tRNA(Asn). Reaction proceeds in two steps: L-aspartate is first activated by ATP to form Asp-AMP and then transferred to the acceptor end of tRNA(Asp/Asn). The protein is Aspartate--tRNA(Asp/Asn) ligase of Methanococcus maripaludis (strain C7 / ATCC BAA-1331).